Reading from the N-terminus, the 661-residue chain is Ubiquitin-associated and SH3 domain-containing protein A (661 aa).

Residues 15–60 enclose the UBA domain; the sequence is KLKSRSSPSLLEPLLAMGFPVHTALKALAATGRKTAEEALAWLHDH. The SH3 domain maps to 276–341; the sequence is VHYQTLRALF…PENYTDRASE (66 aa). The tract at residues 395 to 661 is phosphatase-like; that stretch reads RKSVLVVRHG…FNWRNWISGN (267 aa).

In terms of assembly, homodimer or homooligomer. Interacts with CBL. Part of a complex containing CBL and activated EGFR. Interacts with ubiquitin and with mono-ubiquitinated proteins. Interacts with dynamin. Highest expression of UBASH3A in tissues belonging to the immune system, including spleen, peripheral blood leukocytes, thymus and bone marrow.

The protein resides in the cytoplasm. It localises to the nucleus. Its function is as follows. Interferes with CBL-mediated down-regulation and degradation of receptor-type tyrosine kinases. Promotes accumulation of activated target receptors, such as T-cell receptors, EGFR and PDGFRB, on the cell surface. Exhibits negligible protein tyrosine phosphatase activity at neutral pH. May act as a dominant-negative regulator of UBASH3B-dependent dephosphorylation. May inhibit dynamin-dependent endocytic pathways by functionally sequestering dynamin via its SH3 domain. The chain is Ubiquitin-associated and SH3 domain-containing protein A (UBASH3A) from Homo sapiens (Human).